Reading from the N-terminus, the 858-residue chain is MENITPLRKQYLDIKKNYPEAIVFFRLGDFYETFEEDARIAARELEIVLTSREMGKGLKVPLAGIPYHALDNYLSRLINRGYKVAICEQVTKPGETKGLVKRQVTRLVTPGTVVEPNLLDSKQNNFLLSLYLTEDSCGLAFADISTSEFGCTQLDINGLEAEINRLNPAEIILPKSQSLNLPLHLKATISKLDGYYFEADVARERLLKHFECQNLSAYGCENLPLAVSAAGALLNYLEETQKSSLKQLERLAAYTISDYMQIDSHTLSNLEIFRSSGGNSLKGSLLGVLDQTKTAMGGRLLRKFLGQPLLRQEDIEKRLSAVDYFFEESLARASLAKALGQIADMERIANRIRQKTILPKELISLKNSLETVSAIHRQFGLMPPPRLAYFLNGLKPLPEMLDIVNEAINDDPPSTLGEGKVIRSGFNPEMDKLCSLAGDARTFLSQMEAREREQTGIKSLKLGYNRVFGYYIEVSNANLADIPQNYIRKQTLVNAERFITPELKEYENLILNAKERLLEMETGLYEQVLNQLGGFYSALLSNAAALASLDVLSAFAEVAVRNGYVRPLFHSENSLVIHRGRHPMVEQGLGYGSFAANDISLSAEDCQIIILTGPNMAGKSTYLKQTALIVLMAQIGSYVPAETAELCLTDRIFSRIGAREDLSAGQSTFMVEMVETASILNTATSRSLLILDEIGRGTSTYDGLAIAQAVVEYIHSQPSLHAKTLFATHYHELVELANYLPRVKNYNIAVSEDRGEVVFLHRIVPGGVDKSYGIHVAKLAGLPGWVIKRAYEVLTELENPAKKEPKIRNCQPQLLLPLTEQTSALAEEIKGLEIESLTPLAALNKLYELKKKAEEQGL.

Gly613–Ser620 contributes to the ATP binding site.

This sequence belongs to the DNA mismatch repair MutS family.

Functionally, this protein is involved in the repair of mismatches in DNA. It is possible that it carries out the mismatch recognition step. This protein has a weak ATPase activity. The sequence is that of DNA mismatch repair protein MutS from Dehalococcoides mccartyi (strain ATCC BAA-2266 / KCTC 15142 / 195) (Dehalococcoides ethenogenes (strain 195)).